A 650-amino-acid chain; its full sequence is Threonine--tRNA ligase (650 aa).

The TGS domain maps to 1–66 (MVQITLPDGS…DQDAKLAIVT (66 aa)). The tract at residues 247–538 (DHRKIGRDLD…LIENHAGAMP (292 aa)) is catalytic. Residues cysteine 338, histidine 389, and histidine 515 each coordinate Zn(2+).

This sequence belongs to the class-II aminoacyl-tRNA synthetase family. Homodimer. Zn(2+) serves as cofactor.

The protein localises to the cytoplasm. The enzyme catalyses tRNA(Thr) + L-threonine + ATP = L-threonyl-tRNA(Thr) + AMP + diphosphate + H(+). Its function is as follows. Catalyzes the attachment of threonine to tRNA(Thr) in a two-step reaction: L-threonine is first activated by ATP to form Thr-AMP and then transferred to the acceptor end of tRNA(Thr). Also edits incorrectly charged L-seryl-tRNA(Thr). The polypeptide is Threonine--tRNA ligase (Bordetella avium (strain 197N)).